Consider the following 593-residue polypeptide: Proteasome-associated ATPase (593 aa).

A coiled-coil region spans residues 23–95 (LLSQISYLEE…LKEEVDRLGQ (73 aa)). 282-287 (GCGKTL) serves as a coordination point for ATP. The tract at residues 592–593 (YL) is docks into pockets in the proteasome alpha-ring.

This sequence belongs to the AAA ATPase family. Homohexamer. Assembles into a hexameric ring structure that caps the 20S proteasome core. Strongly interacts with the prokaryotic ubiquitin-like protein Pup through a hydrophobic interface; the interacting region of ARC lies in its N-terminal coiled-coil domain. There is one Pup binding site per ARC hexamer ring. Upon ATP-binding, the C-terminus of ARC interacts with the alpha-rings of the proteasome core, possibly by binding to the intersubunit pockets.

It functions in the pathway protein degradation; proteasomal Pup-dependent pathway. In terms of biological role, ATPase which is responsible for recognizing, binding, unfolding and translocation of pupylated proteins into the bacterial 20S proteasome core particle. May be essential for opening the gate of the 20S proteasome via an interaction with its C-terminus, thereby allowing substrate entry and access to the site of proteolysis. Thus, the C-termini of the proteasomal ATPase may function like a 'key in a lock' to induce gate opening and therefore regulate proteolysis. This chain is Proteasome-associated ATPase, found in Geodermatophilus obscurus (strain ATCC 25078 / DSM 43160 / JCM 3152 / CCUG 61914 / KCC A-0152 / KCTC 9177 / NBRC 13315 / NRRL B-3577 / G-20).